A 309-amino-acid chain; its full sequence is MTAENQSTVTEFILGGLTNRPELQLPLFLLFLGIYVVTMVGNLGMITLIGLNSQLHTPMYFFLSNLSLVDLCYSSVITPKMLINFVSQRNLISYVGCMSQLYFFLVFVIAECYMLTVMAYDRYVAICQPLLYNIIMSPALCSLLVAFVYAVGLIGSAIETGLMLKLNYCEDLISHYFCDILPLMKLSCSSTYDVEMAVFFLAGFDIIVTSLTVLISYAFILSSILRISSNEGRSKAFSTCSSHFAAVGLFYGSTAFMYLKPSTASSLAQENVASVFYTTVIPMFNPLIYSLRNKEVKTALDKTLRRKVF.

Residues Met1–Phe28 are Extracellular-facing. A helical membrane pass occupies residues Leu29–Ile49. Over Gly50 to His56 the chain is Cytoplasmic. A helical transmembrane segment spans residues Thr57–Ile77. Topologically, residues Thr78–Asn90 are extracellular. A helical transmembrane segment spans residues Leu91–Glu111. A disulfide bridge links Cys97 with Cys188. At Cys112–Asn133 the chain is on the cytoplasmic side. Residues Ile134 to Ile154 form a helical membrane-spanning segment. Residues Gly155–Glu195 are Extracellular-facing. Residues Met196–Ser216 traverse the membrane as a helical segment. The Cytoplasmic portion of the chain corresponds to Tyr217–Ser238. The helical transmembrane segment at Thr239–Leu259 threads the bilayer. The Extracellular portion of the chain corresponds to Lys260 to Glu270. The chain crosses the membrane as a helical span at residues Asn271 to Leu291. Residues Arg292–Phe309 lie on the Cytoplasmic side of the membrane.

The protein belongs to the G-protein coupled receptor 1 family.

It localises to the cell membrane. Its function is as follows. Odorant receptor. This chain is Olfactory receptor 8A1, found in Mus musculus (Mouse).